Here is a 40-residue protein sequence, read N- to C-terminus: Alpha-1B-glycoprotein (40 aa).

Asn23 carries N-linked (GlcNAc...) asparagine glycosylation.

In terms of assembly, interacts with CRISP3. In terms of tissue distribution, plasma.

The protein localises to the secreted. The protein is Alpha-1B-glycoprotein (A1BG) of Sus scrofa (Pig).